A 294-amino-acid polypeptide reads, in one-letter code: Probable WRKY transcription factor 70 (294 aa).

Residues 72 to 94 (SQNASCDNDGKFEDSGDSRKRLG) form a disordered region. A compositionally biased stretch (basic and acidic residues) spans 79–91 (NDGKFEDSGDSRK). The Nuclear localization signal motif lies at 90–97 (RKRLGPVK). A DNA-binding region (WRKY) is located at residues 114–182 (IESTILEDAF…YIGNHTCNTN (69 aa)). The disordered stretch occupies residues 201–229 (SEDHKSPSLSTSMKEEDNPHRHHGSSTEN).

This sequence belongs to the WRKY group III family. In terms of assembly, interacts with WRKY30. Binds to BZR2/BES1 to cooperatively regulate the expression of target genes. Binds to unmodified (i.e. not sumoylated) NPR1. Phosphorylated and destabilized by ASK7/BIN2. As to expression, expressed in leaves and flowers.

Its subcellular location is the nucleus. In terms of biological role, transcription factor involved in senescence, biotic and abiotic stress responses by modulating various phytohormones signaling pathways. Interacts specifically with the W box (5'-(T)TGAC[CT]-3'), a frequently occurring elicitor-responsive cis-acting element. Binds to the 5'-[CT]GACTTTT-3' motif in promoters of target genes to induce their expression. Binding to the W-box element of PR-1 promoter is mediated by not-sumoylated NPR1 in the absence of salicylic acid. Plays an important but not indispensable role in jasmonate and salicylic acid signaling. Positively regulates the salicylic acid (SA)-mediated signal pathway, but negatively the jasmonic acid (JA)-mediated signal pathway, thus determining the balance between these mutually antagonistic pathways. Together with WRKY46, WRKY53 and WRKY54, prevents defense response to the necrotrophic pathogens P.carotovorum and B.cinerea, but promotes defense responses (including SA-induced pathogenesis-related (PR) genes expression) against biotrophic/hemibiotrophic SA-monitored pathogens (e.g. P.syringae, E.carotovora subsp. carotovora SCC3193 and E.cichoracearum), probably by regulating negatively the JA/ET and positively the SA signaling pathways. Contributes to the suppression of jasmonic acid (MeJA)-induced expression of JA-responsive genes (e.g. PDF1.2). Promotes susceptibility to JA-monitored pathogens (e.g. A.brassicicola), probably by facilitating SA-controlled suppression of JA-mediated defense. Represses the biosynthesis of the phytoalexin camalexin and indol-3-ylmethyl glucosinolate (IGS). Represses both SA and JA/ethylene (ET) mediated defense marker genes expression. Negative regulator of SA biosynthesis. Negative regulator of EDS1-dependent defense against E.amylovora. Required for RPP4-mediated disease resistance and basal defense against H.parasitica, probably via late up-regulation (LURP) of resistance genes (e.g. CML10/CaBP22 and LURP1). Probably involved in defense responses toward insects (e.g. P.xylostella and B.brassicae). Together with WRKY54, negative regulator of developmental senescence, probably via the regulation of several senescence-associated markers genes. Together with WRKY46 and WRKY54, promotes brassinosteroid (BR)-regulated plant growth but prevent drought response by modulating gene expression. In collaboration with WRKY54, prevents stomatal closure and, consequently, osmotic stress tolerance. Regulates rhizobacterium B.cereus AR156-induced systemic resistance (ISR) to P.syringae pv. tomato DC3000. The sequence is that of Probable WRKY transcription factor 70 from Arabidopsis thaliana (Mouse-ear cress).